The primary structure comprises 207 residues: LexA repressor (207 aa).

Positions 28 to 47 form a DNA-binding region, H-T-H motif; it reads VREIARRFRITPRGAQLHLV. Active-site for autocatalytic cleavage activity residues include Ser-119 and Lys-156.

The protein belongs to the peptidase S24 family. In terms of assembly, homodimer.

It carries out the reaction Hydrolysis of Ala-|-Gly bond in repressor LexA.. Represses a number of genes involved in the response to DNA damage (SOS response), including recA and lexA. In the presence of single-stranded DNA, RecA interacts with LexA causing an autocatalytic cleavage which disrupts the DNA-binding part of LexA, leading to derepression of the SOS regulon and eventually DNA repair. The sequence is that of LexA repressor from Thermotoga neapolitana (strain ATCC 49049 / DSM 4359 / NBRC 107923 / NS-E).